The following is a 475-amino-acid chain: Glycogen synthase (475 aa).

Residue Lys15 coordinates ADP-alpha-D-glucose.

It belongs to the glycosyltransferase 1 family. Bacterial/plant glycogen synthase subfamily.

The catalysed reaction is [(1-&gt;4)-alpha-D-glucosyl](n) + ADP-alpha-D-glucose = [(1-&gt;4)-alpha-D-glucosyl](n+1) + ADP + H(+). Its pathway is glycan biosynthesis; glycogen biosynthesis. Synthesizes alpha-1,4-glucan chains using ADP-glucose. This is Glycogen synthase from Anaeromyxobacter sp. (strain K).